The primary structure comprises 228 residues: PKHD-type hydroxylase YbiX (228 aa).

Positions 78–177 constitute a Fe2OG dioxygenase domain; the sequence is TLSTPLFNRY…RVASFIWIQS (100 aa). His-96, Asp-98, and His-158 together coordinate Fe cation. Position 168 (Arg-168) interacts with 2-oxoglutarate.

Fe(2+) is required as a cofactor. It depends on L-ascorbate as a cofactor.

This chain is PKHD-type hydroxylase YbiX, found in Escherichia coli O157:H7.